Reading from the N-terminus, the 458-residue chain is DNA repair protein RadA (458 aa).

A C4-type zinc finger spans residues 10–27 (CQSCGYESPKWMGKCPGC). Residue 98-105 (GDPGIGKS) coordinates ATP. The RadA KNRFG motif signature appears at 255-259 (KNRFG). Residues 354–458 (DAYLKVAGGV…AEALRTSLGG (105 aa)) form a lon-protease-like region.

The protein belongs to the RecA family. RadA subfamily. As to quaternary structure, interacts with DisA.

Its function is as follows. DNA-dependent ATPase involved in processing of recombination intermediates, plays a role in repairing DNA breaks. Stimulates the branch migration of RecA-mediated strand transfer reactions, allowing the 3' invading strand to extend heteroduplex DNA faster. Binds ssDNA in the presence of ADP but not other nucleotides, has ATPase activity that is stimulated by ssDNA and various branched DNA structures, but inhibited by SSB. Does not have RecA's homology-searching function. In terms of biological role, plays a role in DNA repair. Might stabilize or process Holliday junction intermediates. May work with DisA following methyl methanesulfonate (MMS) but not H(2)O(2) damage; DisA is a DNA integrity scanning protein with c-di-AMP synthase activity. The sequence is that of DNA repair protein RadA from Bacillus subtilis (strain 168).